We begin with the raw amino-acid sequence, 613 residues long: tRNA 5-methylaminomethyl-2-thiouridine biosynthesis bifunctional protein MnmC (613 aa).

The tract at residues 1–225 (MKKAKLIFKD…KREMIKAYLE (225 aa)) is tRNA (mnm(5)s(2)U34)-methyltransferase. Residues 252-613 (IGAGISSAVL…FLVRKLKKGL (362 aa)) are FAD-dependent cmnm(5)s(2)U34 oxidoreductase.

In the N-terminal section; belongs to the methyltransferase superfamily. tRNA (mnm(5)s(2)U34)-methyltransferase family. It in the C-terminal section; belongs to the DAO family. FAD is required as a cofactor.

It localises to the cytoplasm. The enzyme catalyses 5-aminomethyl-2-thiouridine(34) in tRNA + S-adenosyl-L-methionine = 5-methylaminomethyl-2-thiouridine(34) in tRNA + S-adenosyl-L-homocysteine + H(+). Catalyzes the last two steps in the biosynthesis of 5-methylaminomethyl-2-thiouridine (mnm(5)s(2)U) at the wobble position (U34) in tRNA. Catalyzes the FAD-dependent demodification of cmnm(5)s(2)U34 to nm(5)s(2)U34, followed by the transfer of a methyl group from S-adenosyl-L-methionine to nm(5)s(2)U34, to form mnm(5)s(2)U34. The polypeptide is tRNA 5-methylaminomethyl-2-thiouridine biosynthesis bifunctional protein MnmC (Campylobacter jejuni subsp. doylei (strain ATCC BAA-1458 / RM4099 / 269.97)).